A 320-amino-acid chain; its full sequence is o-succinylbenzoate synthase (320 aa).

Catalysis depends on Lys-133, which acts as the Proton donor. The Mg(2+) site is built by Asp-161, Glu-190, and Asp-213. The active-site Proton acceptor is the Lys-235.

It belongs to the mandelate racemase/muconate lactonizing enzyme family. MenC type 1 subfamily. A divalent metal cation serves as cofactor.

The enzyme catalyses (1R,6R)-6-hydroxy-2-succinyl-cyclohexa-2,4-diene-1-carboxylate = 2-succinylbenzoate + H2O. It functions in the pathway quinol/quinone metabolism; 1,4-dihydroxy-2-naphthoate biosynthesis; 1,4-dihydroxy-2-naphthoate from chorismate: step 4/7. It participates in quinol/quinone metabolism; menaquinone biosynthesis. Converts 2-succinyl-6-hydroxy-2,4-cyclohexadiene-1-carboxylate (SHCHC) to 2-succinylbenzoate (OSB). This is o-succinylbenzoate synthase from Escherichia coli O6:H1 (strain CFT073 / ATCC 700928 / UPEC).